The chain runs to 537 residues: 6-phosphogluconate dehydrogenase, decarboxylating 2, chloroplastic (537 aa).

The transit peptide at 1-44 (MRSEVPSSTSPSFLSPPFIHLPLLSLSSPTPLPHSSSSTFSLFS) directs the protein to the chloroplast. NADP(+)-binding positions include 55-60 (GLAVMG), 78-80 (NRT), 122-124 (VKA), and asparagine 150. Substrate contacts are provided by residues asparagine 150 and 176-178 (SGG). Residue lysine 230 is the Proton acceptor of the active site. 233-234 (HN) serves as a coordination point for substrate. The Proton donor role is filled by glutamate 237. Substrate is bound by residues tyrosine 238, lysine 308, arginine 335, arginine 500, and histidine 506.

The protein belongs to the 6-phosphogluconate dehydrogenase family. In terms of assembly, homodimer.

Its subcellular location is the plastid. The protein localises to the chloroplast. It carries out the reaction 6-phospho-D-gluconate + NADP(+) = D-ribulose 5-phosphate + CO2 + NADPH. Its pathway is carbohydrate degradation; pentose phosphate pathway; D-ribulose 5-phosphate from D-glucose 6-phosphate (oxidative stage): step 3/3. In terms of biological role, catalyzes the oxidative decarboxylation of 6-phosphogluconate to ribulose 5-phosphate and CO(2), with concomitant reduction of NADP to NADPH. In Spinacia oleracea (Spinach), this protein is 6-phosphogluconate dehydrogenase, decarboxylating 2, chloroplastic.